Here is a 103-residue protein sequence, read N- to C-terminus: Protein translation factor SUI1 homolog (103 aa).

This sequence belongs to the SUI1 family.

This Methanocaldococcus jannaschii (strain ATCC 43067 / DSM 2661 / JAL-1 / JCM 10045 / NBRC 100440) (Methanococcus jannaschii) protein is Protein translation factor SUI1 homolog.